Here is a 173-residue protein sequence, read N- to C-terminus: Ribosome maturation factor RimM (173 aa).

One can recognise a PRC barrel domain in the interval 93 to 166 (EDEYLVSDMI…KMLVDTIEGM (74 aa)).

This sequence belongs to the RimM family. Binds ribosomal protein uS19.

Its subcellular location is the cytoplasm. An accessory protein needed during the final step in the assembly of 30S ribosomal subunit, possibly for assembly of the head region. Essential for efficient processing of 16S rRNA. May be needed both before and after RbfA during the maturation of 16S rRNA. It has affinity for free ribosomal 30S subunits but not for 70S ribosomes. The polypeptide is Ribosome maturation factor RimM (Fusobacterium nucleatum subsp. nucleatum (strain ATCC 25586 / DSM 15643 / BCRC 10681 / CIP 101130 / JCM 8532 / KCTC 2640 / LMG 13131 / VPI 4355)).